A 116-amino-acid polypeptide reads, in one-letter code: MAGFGLPNFGQLTEAFKKAKQIQQDAQKLQDELENMEIEGKSDDEMIKVWISGNQLPLKVEVQENFLNADKEKIEQNILQAIKKAHELSTTTMKERMNDLTGGLNLNLPGFDNNDS.

This sequence belongs to the YbaB/EbfC family. Homodimer.

The protein resides in the cytoplasm. The protein localises to the nucleoid. Binds to DNA and alters its conformation. May be involved in regulation of gene expression, nucleoid organization and DNA protection. This Prochlorococcus marinus (strain MIT 9301) protein is Nucleoid-associated protein P9301_00191.